A 162-amino-acid chain; its full sequence is Protein LTO1 (162 aa).

The deca-GX3 motif; required for interaction with YAE1 and the CIA complex stretch occupies residues 17 to 53 (GFLEGQNENIKQSFLEGKQYGLQVGFQRFTLLGQMEG).

This sequence belongs to the LTO1 family. Forms a complex with YAE1; the complex bridges the interaction between the CIA complex and RLI1. Associates with the CIA complex (via its C-terminal tryptophan).

The protein localises to the nucleus. Its function is as follows. Essential for life in oxygen, but nonessential under anaerobic conditions. Required for biogenesis of the large ribosomal subunit and initiation of translation in oxygen. The complex LTO1:YAE1 functions as a target specific adapter that recruits apo-RLI1 to the cytosolic iron-sulfur protein assembly (CIA) complex machinery. The protein is Protein LTO1 of Saccharomyces cerevisiae (strain ATCC 204508 / S288c) (Baker's yeast).